We begin with the raw amino-acid sequence, 368 residues long: H-2 class I histocompatibility antigen, K-D alpha chain (368 aa).

The first 21 residues, 1–21, serve as a signal peptide directing secretion; sequence MAPCTLLLLLAAALAPTQTRA. The interval 22–111 is alpha-1; the sequence is GPHSLRYFVT…AQRYYNQSKG (90 aa). Topologically, residues 22-305 are extracellular; that stretch reads GPHSLRYFVT…KLPPSTVSNT (284 aa). Asn107 carries an N-linked (GlcNAc...) asparagine glycan. An alpha-2 region spans residues 112 to 203; the sequence is GSHTFQRMFG…ELGNETLLRT (92 aa). A disulfide bridge connects residues Cys122 and Cys185. N-linked (GlcNAc...) asparagine glycans are attached at residues Asn197 and Asn277. The interval 204–295 is alpha-3; sequence DSPKAHVTYH…GLPEPLTLRW (92 aa). Positions 206-294 constitute an Ig-like C1-type domain; it reads PKAHVTYHPR…KGLPEPLTLR (89 aa). The cysteines at positions 224 and 280 are disulfide-linked. Residues 296-305 are connecting peptide; sequence KLPPSTVSNT. The helical transmembrane segment at 306–328 threads the bilayer; that stretch reads VIIAVLVVLGAAIVTGAVVAFVM. At 329-368 the chain is on the cytoplasmic side; it reads KMRRNTGGKGVNYALAPGSQTSDLSLPDGKVMVHDPHSLA. Phosphoserine occurs at positions 350 and 353.

The protein belongs to the MHC class I family. In terms of assembly, heterodimer of an alpha chain and a beta chain (beta-2-microglobulin).

Its subcellular location is the membrane. Involved in the presentation of foreign antigens to the immune system. The protein is H-2 class I histocompatibility antigen, K-D alpha chain (H2-K1) of Mus musculus (Mouse).